The chain runs to 339 residues: Ketol-acid reductoisomerase (NADP(+)) (339 aa).

One can recognise a KARI N-terminal Rossmann domain in the interval 1–182 (MRVYYDSDAD…GGGRAGIIET (182 aa)). Residues 24–27 (YGSQ), R48, S51, and 83–86 (DEGQ) contribute to the NADP(+) site. Residue H108 is part of the active site. G134 contacts NADP(+). Positions 183 to 328 (TFKEECETDL…EKLRAMMPWI (146 aa)) constitute a KARI C-terminal knotted domain. Positions 191, 195, 227, and 231 each coordinate Mg(2+). A substrate-binding site is contributed by S252.

This sequence belongs to the ketol-acid reductoisomerase family. Mg(2+) serves as cofactor.

The enzyme catalyses (2R)-2,3-dihydroxy-3-methylbutanoate + NADP(+) = (2S)-2-acetolactate + NADPH + H(+). It carries out the reaction (2R,3R)-2,3-dihydroxy-3-methylpentanoate + NADP(+) = (S)-2-ethyl-2-hydroxy-3-oxobutanoate + NADPH + H(+). It participates in amino-acid biosynthesis; L-isoleucine biosynthesis; L-isoleucine from 2-oxobutanoate: step 2/4. The protein operates within amino-acid biosynthesis; L-valine biosynthesis; L-valine from pyruvate: step 2/4. Its function is as follows. Involved in the biosynthesis of branched-chain amino acids (BCAA). Catalyzes an alkyl-migration followed by a ketol-acid reduction of (S)-2-acetolactate (S2AL) to yield (R)-2,3-dihydroxy-isovalerate. In the isomerase reaction, S2AL is rearranged via a Mg-dependent methyl migration to produce 3-hydroxy-3-methyl-2-ketobutyrate (HMKB). In the reductase reaction, this 2-ketoacid undergoes a metal-dependent reduction by NADPH to yield (R)-2,3-dihydroxy-isovalerate. The chain is Ketol-acid reductoisomerase (NADP(+)) from Acidiphilium cryptum (strain JF-5).